The sequence spans 466 residues: Putative multidrug resistance protein MdtD (466 aa).

14 consecutive transmembrane segments (helical) span residues leucine 11–alanine 31, serine 48–alanine 68, isoleucine 71–cysteine 91, valine 105–isoleucine 125, phenylalanine 137–valine 157, tryptophan 164–methionine 184, phenylalanine 194–aspartate 214, serine 218–leucine 238, phenylalanine 262–methionine 282, glycine 292–isoleucine 312, valine 328–alanine 347, tryptophan 351–phenylalanine 370, serine 402–alanine 422, and threonine 429–phenylalanine 449.

This sequence belongs to the major facilitator superfamily. TCR/Tet family.

The protein localises to the cell inner membrane. The protein is Putative multidrug resistance protein MdtD of Pectobacterium atrosepticum (strain SCRI 1043 / ATCC BAA-672) (Erwinia carotovora subsp. atroseptica).